A 118-amino-acid chain; its full sequence is uncharacterized protein (118 aa).

It belongs to the transposase IS3/IS150/IS904 family.

This is an uncharacterized protein from Haemophilus influenzae (strain ATCC 51907 / DSM 11121 / KW20 / Rd).